The following is a 121-amino-acid chain: MIQQESYLTVADNSGAKRIQCIRVLGTNRRYAHVGDVIVAAVKDAAPNMGVKKSDVVKAVVVRTKATMRRETGNSIRFDDNAAVIINDDKNPKGTRVFGPVARELRERSFTKIVSLAPEVI.

The protein belongs to the universal ribosomal protein uL14 family. As to quaternary structure, part of the 50S ribosomal subunit. Forms a cluster with proteins L3 and L19. In the 70S ribosome, L14 and L19 interact and together make contacts with the 16S rRNA in bridges B5 and B8.

Functionally, binds to 23S rRNA. Forms part of two intersubunit bridges in the 70S ribosome. The polypeptide is Large ribosomal subunit protein uL14 (Synechococcus sp. (strain CC9605)).